A 65-amino-acid polypeptide reads, in one-letter code: Large ribosomal subunit protein bL35 (65 aa).

This sequence belongs to the bacterial ribosomal protein bL35 family.

The protein is Large ribosomal subunit protein bL35 of Yersinia enterocolitica serotype O:8 / biotype 1B (strain NCTC 13174 / 8081).